A 117-amino-acid chain; its full sequence is MSASPTARQAITQALPMITRKVVISDPIQMPEVYSSTPGGTLYSTTPGGTKLIYERAFMKNLRGSPLSQTPPSNVPSCLLRGTPRTPFRKCVPVPTELIKQTKSLKIEDQEQFQLDL.

Residues T37 and T46 each carry the phosphothreonine modification. Positions 54–60 (YERAFMK) match the YXXXXLphi motif; atypical motif. Phosphoserine is present on S65. Residue T70 is modified to Phosphothreonine.

Belongs to the eIF4E-binding protein family. In terms of assembly, hypophosphorylated Thor/4E-BP competes with eIF4G1 to interact with eIF4E1; insulin stimulated Akt1 or Tor phosphorylation of Thor/4E-BP causes dissociation of the complex allowing eIF4G1 to bind and consequent initiation of translation. In terms of processing, phosphorylation at Thr-37, Thr-46, Ser-65 and Thr-70, corresponding to the hyperphosphorylated form, impairs its ability to prevent the interaction between eIF4G1 and eIF4E1, without affecting its interaction with free eIF4E1. Phosphorylated in rtesponse to insulin. Phosphorylation at Thr-46 is regulated by Tor and constitutes the major phosphorylation event that regulates activity. In terms of tissue distribution, widely expressed.

Functionally, repressor of translation initiation that regulates eIF4E1 activity by preventing its assembly into the eIF4F complex. Hypophosphorylated form competes with eIF4G1 and strongly binds to eIF4E1, leading to repress translation. In contrast, hyperphosphorylated form dissociates from eIF4E1, allowing interaction between eIF4G1 and eIF4E1, leading to initiation of translation. Acts as a regulator of various biological processes, such as innate immunity, cell growth or synaptic transmission. Acts downstream of phosphoinositide-3-kinase (PI3K) to regulate cell growth. Extends lifespan upon dietary restriction by regulating the mitochondrial translation. Acts as a regulator of lifespan in response to cold by regulating the mitochondrial translation. Acts as a negative regulator of presynaptic release of neurotransmitter in motor neurons: Thor expression is induced in response to insulin signaling, leading to prevent of translation of complexin (cpx), a protein known to regulate the exocytosis of synaptic vesicles. Acts as a negative regulator of synaptic strength at the neuromuscular junction: Thor expression in response to acute fasting prevents translation, thereby suppressing retrograde synaptic enhancement. The chain is Eukaryotic translation initiation factor 4E-binding protein from Drosophila melanogaster (Fruit fly).